We begin with the raw amino-acid sequence, 224 residues long: Small ribosomal subunit protein uS3 (224 aa).

The KH type-2 domain maps to 38–106 (IRKFISEKLK…QVHINIVEIK (69 aa)).

This sequence belongs to the universal ribosomal protein uS3 family. Part of the 30S ribosomal subunit. Forms a tight complex with proteins S10 and S14.

Its function is as follows. Binds the lower part of the 30S subunit head. Binds mRNA in the 70S ribosome, positioning it for translation. The chain is Small ribosomal subunit protein uS3 from Lactobacillus acidophilus (strain ATCC 700396 / NCK56 / N2 / NCFM).